Consider the following 78-residue polypeptide: Translation initiation factor IF-1, chloroplastic (78 aa).

An S1-like domain is found at 1-72 (MKKQKLIDME…TKGRITYRFH (72 aa)).

The protein belongs to the IF-1 family. Component of the 30S ribosomal translation pre-initiation complex which assembles on the 30S ribosome in the order IF-2 and IF-3, IF-1 and N-formylmethionyl-tRNA(fMet); mRNA recruitment can occur at any time during PIC assembly.

It is found in the plastid. The protein resides in the chloroplast. In terms of biological role, one of the essential components for the initiation of protein synthesis. Stabilizes the binding of IF-2 and IF-3 on the 30S subunit to which N-formylmethionyl-tRNA(fMet) subsequently binds. Helps modulate mRNA selection, yielding the 30S pre-initiation complex (PIC). Upon addition of the 50S ribosomal subunit IF-1, IF-2 and IF-3 are released leaving the mature 70S translation initiation complex. The polypeptide is Translation initiation factor IF-1, chloroplastic (Huperzia lucidula (Shining clubmoss)).